A 159-amino-acid polypeptide reads, in one-letter code: 2-C-methyl-D-erythritol 2,4-cyclodiphosphate synthase (159 aa).

A divalent metal cation is bound by residues Asp8 and His10. Residues 8-10 (DVH) and 34-35 (HS) each bind 4-CDP-2-C-methyl-D-erythritol 2-phosphate. His42 serves as a coordination point for a divalent metal cation. 4-CDP-2-C-methyl-D-erythritol 2-phosphate is bound by residues 56–58 (DIG), 61–65 (FPDTD), 100–106 (AQAPKML), 132–135 (TTTE), Phe139, and Arg142.

It belongs to the IspF family. Homotrimer. The cofactor is a divalent metal cation.

The enzyme catalyses 4-CDP-2-C-methyl-D-erythritol 2-phosphate = 2-C-methyl-D-erythritol 2,4-cyclic diphosphate + CMP. Its pathway is isoprenoid biosynthesis; isopentenyl diphosphate biosynthesis via DXP pathway; isopentenyl diphosphate from 1-deoxy-D-xylulose 5-phosphate: step 4/6. Involved in the biosynthesis of isopentenyl diphosphate (IPP) and dimethylallyl diphosphate (DMAPP), two major building blocks of isoprenoid compounds. Catalyzes the conversion of 4-diphosphocytidyl-2-C-methyl-D-erythritol 2-phosphate (CDP-ME2P) to 2-C-methyl-D-erythritol 2,4-cyclodiphosphate (ME-CPP) with a corresponding release of cytidine 5-monophosphate (CMP). This is 2-C-methyl-D-erythritol 2,4-cyclodiphosphate synthase from Klebsiella pneumoniae (strain 342).